The sequence spans 486 residues: MNEVMVIKEGWLQKRGEYIKTWRPRYFLLKSDGSFIGYKEKPESTEHNVVLPPLNNFSVAECQLMKTERPRPNTFVIRCLQWTTVIERTFHVDTPEEREEWIIAIQTVANGLKNQVPEDEEEEAMEVKYGSPSDVSSAEQMDVAMSKGHPKVTMNDFDYLKLLGKGTFGKVILVREKATGRYYAMKILRKEVIIAKDEVAHTLTESRVLQNTKHPFLTALKYAFQTSDRLCFVMEYANGGELFFHLSRERVFTEDRARFYGAEIVSALEYLHSRNVVYRDIKLENLMLDKDGHVKITDFGLCKEGITDGATMRTFCGTPEYLAPEVLEDNDYGRAVDWWGLGVVMYEMMCGRLPFYNQDHERLFELILMEEIRFPRTLSPEAKSLLAGLLKKDPKQRLGGGPNDAQEVMSHRFFVSINWQDVTERKLTPPFKPQVTSEIDTRYFDDEFTAQSITLTPPDRYDNLDALESDQRPHFPQFSYSASIRE.

The region spanning 5–110 is the PH domain; the sequence is MVIKEGWLQK…WIIAIQTVAN (106 aa). O-linked (GlcNAc) serine glycans are attached at residues Ser-133 and Ser-136. Residues 157-414 form the Protein kinase domain; it reads FDYLKLLGKG…AQEVMSHRFF (258 aa). Residues 163–171 and Lys-186 each bind ATP; that span reads LGKGTFGKV. Asp-280 (proton acceptor) is an active-site residue. Thr-311 is a glycosylation site (O-linked (GlcNAc) threonine). Thr-314 is subject to Phosphothreonine. Thr-318 carries an O-linked (GlcNAc) threonine glycan. The 72-residue stretch at 415-486 folds into the AGC-kinase C-terminal domain; sequence VSINWQDVTE…QFSYSASIRE (72 aa). Residues 455–486 form a disordered region; it reads LTPPDRYDNLDALESDQRPHFPQFSYSASIRE. Residues 459-473 are compositionally biased toward basic and acidic residues; sequence DRYDNLDALESDQRP. Residue Ser-479 is modified to Phosphoserine. Ser-479 carries an O-linked (GlcNAc) serine; alternate glycan.

Belongs to the protein kinase superfamily. AGC Ser/Thr protein kinase family. RAC subfamily. Post-translationally, phosphorylation on Thr-314 and Ser-479 is required for full activity. Phosphorylation of the activation loop at Thr-314 by PDPK1/PDK1 is a prerequisite for full activation. Phosphorylation by mTORC2 at Ser-479 in response to growth factors plays a key role in AKT1 activation by facilitating subsequent phosphorylation of the activation loop by PDPK1/PDK1.

It carries out the reaction L-seryl-[protein] + ATP = O-phospho-L-seryl-[protein] + ADP + H(+). The enzyme catalyses L-threonyl-[protein] + ATP = O-phospho-L-threonyl-[protein] + ADP + H(+). Its activity is regulated as follows. Two specific sites, one in the kinase domain (Thr-314) and the other in the C-terminal regulatory region (Ser-479), need to be phosphorylated for its full activation. Functionally, akt2-a is one of several closely related serine/threonine-protein kinases known as the AKT kinase, and which regulate many processes including metabolism, proliferation, cell survival, growth and angiogenesis. This is mediated through serine and/or threonine phosphorylation of a range of downstream substrates. Over 100 substrate candidates have been reported so far, but for most of them, no isoform specificity has been reported. May be involved in the inhibition of ciliogenesis. The polypeptide is RAC-beta serine/threonine-protein kinase A (akt2-a) (Xenopus laevis (African clawed frog)).